Here is a 429-residue protein sequence, read N- to C-terminus: Citrate synthase (429 aa).

Residues His306 and Asp364 contribute to the active site.

It belongs to the citrate synthase family.

The enzyme catalyses oxaloacetate + acetyl-CoA + H2O = citrate + CoA + H(+). It functions in the pathway carbohydrate metabolism; tricarboxylic acid cycle; isocitrate from oxaloacetate: step 1/2. The sequence is that of Citrate synthase (gltA) from Rhizobium meliloti (strain 1021) (Ensifer meliloti).